The following is a 353-amino-acid chain: Quinolinate synthase (353 aa).

2 residues coordinate iminosuccinate: His49 and Ser70. [4Fe-4S] cluster is bound at residue Cys115. Iminosuccinate contacts are provided by residues 141–143 and Ser158; that span reads YAN. Cys202 serves as a coordination point for [4Fe-4S] cluster. Iminosuccinate is bound by residues 228 to 230 and Thr245; that span reads HPE. Cys299 contributes to the [4Fe-4S] cluster binding site.

This sequence belongs to the quinolinate synthase family. Type 1 subfamily. It depends on [4Fe-4S] cluster as a cofactor.

It is found in the cytoplasm. It catalyses the reaction iminosuccinate + dihydroxyacetone phosphate = quinolinate + phosphate + 2 H2O + H(+). Its pathway is cofactor biosynthesis; NAD(+) biosynthesis; quinolinate from iminoaspartate: step 1/1. Its function is as follows. Catalyzes the condensation of iminoaspartate with dihydroxyacetone phosphate to form quinolinate. In Marinobacter nauticus (strain ATCC 700491 / DSM 11845 / VT8) (Marinobacter aquaeolei), this protein is Quinolinate synthase.